The following is a 238-amino-acid chain: tRNA (guanine-N(7)-)-methyltransferase (238 aa).

The S-adenosyl-L-methionine site is built by Glu-68, Glu-93, Asp-120, and Asp-143. Asp-143 is an active-site residue. Substrate contacts are provided by residues Lys-147, Asp-179, and 216-219; that span reads TKFE.

This sequence belongs to the class I-like SAM-binding methyltransferase superfamily. TrmB family.

The enzyme catalyses guanosine(46) in tRNA + S-adenosyl-L-methionine = N(7)-methylguanosine(46) in tRNA + S-adenosyl-L-homocysteine. It participates in tRNA modification; N(7)-methylguanine-tRNA biosynthesis. Catalyzes the formation of N(7)-methylguanine at position 46 (m7G46) in tRNA. This chain is tRNA (guanine-N(7)-)-methyltransferase, found in Shewanella putrefaciens (strain CN-32 / ATCC BAA-453).